A 119-amino-acid polypeptide reads, in one-letter code: Immunoglobulin heavy variable 2-70 (119 aa).

Residues Met1 to Ser19 form the signal peptide. A Pyrrolidone carboxylic acid modification is found at Gln20. The segment at Gln20–Ser44 is framework-1. Positions Gln20–Ile119 constitute an Ig-like domain. A disulfide bond links Cys41 and Cys116. The complementarity-determining-1 stretch occupies residues Gly45–Cys54. A framework-2 region spans residues Val55–Leu71. Positions Ile72–Lys78 are complementarity-determining-2. Residues Tyr79 to Cys116 form a framework-3 region. The interval Ala117 to Ile119 is complementarity-determining-3.

Immunoglobulins are composed of two identical heavy chains and two identical light chains; disulfide-linked.

Its subcellular location is the secreted. The protein resides in the cell membrane. V region of the variable domain of immunoglobulin heavy chains that participates in the antigen recognition. Immunoglobulins, also known as antibodies, are membrane-bound or secreted glycoproteins produced by B lymphocytes. In the recognition phase of humoral immunity, the membrane-bound immunoglobulins serve as receptors which, upon binding of a specific antigen, trigger the clonal expansion and differentiation of B lymphocytes into immunoglobulins-secreting plasma cells. Secreted immunoglobulins mediate the effector phase of humoral immunity, which results in the elimination of bound antigens. The antigen binding site is formed by the variable domain of one heavy chain, together with that of its associated light chain. Thus, each immunoglobulin has two antigen binding sites with remarkable affinity for a particular antigen. The variable domains are assembled by a process called V-(D)-J rearrangement and can then be subjected to somatic hypermutations which, after exposure to antigen and selection, allow affinity maturation for a particular antigen. This chain is Immunoglobulin heavy variable 2-70, found in Homo sapiens (Human).